The chain runs to 377 residues: RCC1 domain-containing protein 1 (377 aa).

Residues 1 to 172 (MAEKRHGAWF…VRQLELGAEH (172 aa)) are interaction with KDM8. An RCC1 1 repeat occupies 6-57 (HGAWFGFGFCGFGQALGSGNSHHSVYSPEPLHASDDICQVSAGWSYTALVTR). Arg144 is modified ((3R)-3-hydroxyarginine). RCC1 repeat units follow at residues 179-230 (AGQV…CLSE), 232-289 (GDIY…IAIQ), and 319-372 (TGEL…VYAM).

In terms of assembly, found in a complex with KDM8. Interacts (via N-terminus) with KDM8 (via N-terminus). Specifically hydroxylated (with R stereochemistry) at C-3 of ARG-141 by KDM8.

Its subcellular location is the chromosome. Its function is as follows. Plays a role in transcriptional repression of satellite repeats, possibly by regulating H3K36 methylation levels in centromeric regions together with KDM8. Possibly together with KDM8, is involved in proper mitotic spindle organization and chromosome segregation. Plays a role in regulating alpha-tubulin deacetylation and cytoskeletal microtubule stability, thereby promoting cell migration and TGF-beta-induced epithelial to mesenchymal transition (EMT), potentially through the inhibition of KDM8. The polypeptide is RCC1 domain-containing protein 1 (Rccd1) (Mus musculus (Mouse)).